We begin with the raw amino-acid sequence, 102 residues long: Carboxysome shell protein CcmK3 (102 aa).

Residues 4–90 (AVGVIQTDGF…PPDNVETVMP (87 aa)) enclose the BMC domain.

It belongs to the bacterial microcompartments protein family. CcmK subfamily. As to quaternary structure, interacts stably with CcmK4, forming heterohexamers that can make dodecamers. Heterohexamers have a 1:2 CcmK3:CcmK4 stoichiometry. Upon expression in E.coli forms oligomers that could be dimers or trimers, but never hexamers; bulky residues in the pore region probably preclude the formation of homohexamers.

Its subcellular location is the carboxysome. Functionally, a probably non-essential, minor shell protein of the carboxysome, a polyhedral inclusion where RuBisCO (ribulose bisphosphate carboxylase, rbcL-rbcS) is sequestered. Hexamers form sheets that form the facets of the polyhedral carboxysome. In PCC 7418 there are several CcmK paralogs with presumably functional differences. This subunit probably only makes heterohexamers with CcmK4. Heterohexamers can also make dodecamers, formation depends on buffer conditions. The chain is Carboxysome shell protein CcmK3 from Halothece sp. (strain PCC 7418) (Synechococcus sp. (strain PCC 7418)).